The sequence spans 333 residues: O-acetyl transferase (333 aa).

It belongs to the acyltransferase 3 family.

It localises to the host cell inner membrane. In terms of biological role, antigenically converts S.flexneri serotype X to 3a, Y to 3b, 1a to 1b and 4a to 4b by O-acetylating the O-antigenic polysaccharide chain. This chain is O-acetyl transferase (OAC), found in Shigella flexneri (Shigella flexneri bacteriophage VI).